A 902-amino-acid polypeptide reads, in one-letter code: Protein translocase subunit SecA (902 aa).

Residues Gln87, 105 to 109 (GEGKT), and Asp512 each bind ATP. Residues 851 to 902 (LARQQQLSHQAPVEELTQGSAAAAQEGRKVGRNDPCPCGSGKKFKHCHGKLQ) are disordered. Positions 886, 888, 897, and 898 each coordinate Zn(2+). Over residues 892–902 (KKFKHCHGKLQ) the composition is skewed to basic residues.

The protein belongs to the SecA family. In terms of assembly, monomer and homodimer. Part of the essential Sec protein translocation apparatus which comprises SecA, SecYEG and auxiliary proteins SecDF-YajC and YidC. Requires Zn(2+) as cofactor.

Its subcellular location is the cell inner membrane. The protein localises to the cytoplasm. It carries out the reaction ATP + H2O + cellular proteinSide 1 = ADP + phosphate + cellular proteinSide 2.. Functionally, part of the Sec protein translocase complex. Interacts with the SecYEG preprotein conducting channel. Has a central role in coupling the hydrolysis of ATP to the transfer of proteins into and across the cell membrane, serving both as a receptor for the preprotein-SecB complex and as an ATP-driven molecular motor driving the stepwise translocation of polypeptide chains across the membrane. This is Protein translocase subunit SecA from Sodalis glossinidius (strain morsitans).